A 395-amino-acid polypeptide reads, in one-letter code: Prostaglandin D2 receptor 2 (395 aa).

Topologically, residues 1 to 33 (MSANATLKPLCPILEQMSRLQSHSNTSIRYIDH) are extracellular. N-linked (GlcNAc...) asparagine glycosylation is found at Asn4 and Asn25. A helical transmembrane segment spans residues 34–56 (AAVLLHGLASLLGLVENGVILFV). The Cytoplasmic segment spans residues 57–67 (VGCRMRQTVVT). The helical transmembrane segment at 68 to 89 (TWVLHLALSDLLASASLPFFTY) threads the bilayer. Over 90–106 (FLAVGHSWELGTTFCKL) the chain is Extracellular. Cys104 and Cys182 are oxidised to a cystine. Residues 107–127 (HSSIFFLNMFASGFLLSAISL) traverse the membrane as a helical segment. Residues 128-146 (DRCLQVVRPVWAQNHRTVA) lie on the Cytoplasmic side of the membrane. The helical transmembrane segment at 147 to 168 (AAHKVCLVLWALAVLNTVPYFV) threads the bilayer. Over 169–210 (FRDTISRLDGRIMCYYNVLLLNPGPDRDATCNSRQVALAVSK) the chain is Extracellular. Residues 211 to 231 (FLLAFLVPLAIIASSHAAVSL) form a helical membrane-spanning segment. The Cytoplasmic segment spans residues 232-247 (RLQHRGRRRPGRFVRL). Residues 248 to 269 (VAAVVAAFALCWGPYHVFSLLE) form a helical membrane-spanning segment. At 270–288 (ARAHANPGLRPLVWRGLPF) the chain is on the extracellular side. Residues 289–308 (VTSLAFFNSVANPVLYVLTC) form a helical membrane-spanning segment. Residues 309-395 (PDMLRKLRRS…LNRALSSTSS (87 aa)) are Cytoplasmic-facing. An Involved in the recycling of CRTH2 motif is present at residues 330–333 (DSEL). A phosphoserine mark is found at Ser331 and Ser345. The tract at residues 333 to 363 (LGGAGSSRRRRTSSTARSASPLALCSRPEEP) is disordered.

It belongs to the G-protein coupled receptor 1 family. Post-translationally, phosphorylated. Widespread expression. High expression in stomach, small intestine, heart and thymus. Intermediate expression in colon, spinal cord and peripheral blood and low expression in brain, skeletal muscle and spleen. Expressed also on Th2- and Tc2- type cells, eosinophils and basophils.

The protein localises to the cell membrane. Functionally, receptor for prostaglandin D2 (PGD2). Coupled to the G(i)-protein. Receptor activation may result in pertussis toxin-sensitive decreases in cAMP levels and Ca(2+) mobilization. PI3K signaling is also implicated in mediating PTGDR2 effects. PGD2 induced receptor internalization. CRTH2 internalization can be regulated by diverse kinases such as, PKC, PKA, GRK2, GPRK5/GRK5 and GRK6. Receptor activation is responsible, at least in part, in immune regulation and allergic/inflammation responses. The chain is Prostaglandin D2 receptor 2 (PTGDR2) from Homo sapiens (Human).